Here is a 600-residue protein sequence, read N- to C-terminus: Elongation factor 4 (600 aa).

A tr-type G domain is found at 4-187 (KYIRNFSIVA…AIIEQIPPPL (184 aa)). Residues 16–21 (DHGKST) and 134–137 (NKID) each bind GTP.

Belongs to the TRAFAC class translation factor GTPase superfamily. Classic translation factor GTPase family. LepA subfamily.

It is found in the cell membrane. It carries out the reaction GTP + H2O = GDP + phosphate + H(+). Required for accurate and efficient protein synthesis under certain stress conditions. May act as a fidelity factor of the translation reaction, by catalyzing a one-codon backward translocation of tRNAs on improperly translocated ribosomes. Back-translocation proceeds from a post-translocation (POST) complex to a pre-translocation (PRE) complex, thus giving elongation factor G a second chance to translocate the tRNAs correctly. Binds to ribosomes in a GTP-dependent manner. The polypeptide is Elongation factor 4 (Malacoplasma penetrans (strain HF-2) (Mycoplasma penetrans)).